A 290-amino-acid chain; its full sequence is Arginine and glutamate-rich protein 1 (290 aa).

Over residues 1 to 10 (MGSRSRTPSP) the composition is skewed to polar residues. Disordered stretches follow at residues 1–137 (MGSR…AKEL), 193–216 (ERRR…KREE), and 249–290 (MDEE…PGAL). The segment covering 12–28 (GKRRHHKSKHKKRSKSH) has biased composition (basic residues). Composition is skewed to basic and acidic residues over residues 29–44 (HDHE…DKSS) and 53–76 (RERD…DYRH). Ser77 and Ser79 each carry phosphoserine. Residues 88 to 99 (SSSSSDSQYSEQ) are compositionally biased toward low complexity. A coiled-coil region spans residues 111-269 (FKKLDEQNQM…QEKRVKEEQK (159 aa)). The segment covering 124-137 (RLAEMERQRRAKEL) has biased composition (basic and acidic residues). Residues 249-269 (MDEERQRMRKEQEKRVKEEQK) show a composition bias toward basic and acidic residues.

This sequence belongs to the ARGLU1 family. Associates with the U1-snRNP complex; the interaction is enhanced by binding of Arglu1 to a stable intronic sequence RNA (sisRNA) produced from the Arglu1 gene by premature cleavage.

It is found in the nucleus. Its subcellular location is the nucleus speckle. Its function is as follows. Post-transcriptional regulator of gene expression; modulates splicing and premature cleavage at cryptic polyadenylation sites of its own pre-mRNA through binding and regulation of the U1-snRNP complex. The sequence is that of Arginine and glutamate-rich protein 1 from Drosophila melanogaster (Fruit fly).